The sequence spans 485 residues: AP2-like ethylene-responsive transcription factor TOE2 (485 aa).

Over residues 124-135 the composition is skewed to gly residues; sequence GDFIGSGSGGGD. The disordered stretch occupies residues 124–161; sequence GDFIGSGSGGGDASRVMQPPSQPVKKSRRGPRSKSSQY. Positions 160–216 form a DNA-binding region, AP2/ERF; that stretch reads QYRGVTFYRRTGRWESHIWDCGKQVYLGGFDTAHAAARAYDRAAVKFRGLEADINFV.

Belongs to the AP2/ERF transcription factor family. AP2 subfamily.

Its subcellular location is the nucleus. Its function is as follows. Probably acts as a transcriptional activator. Binds to the GCC-box pathogenesis-related promoter element. May be involved in the regulation of gene expression by stress factors and by components of stress signal transduction pathways. Regulates negatively the transition to flowering time and confers flowering time delay. This chain is AP2-like ethylene-responsive transcription factor TOE2 (TOE2), found in Arabidopsis thaliana (Mouse-ear cress).